The chain runs to 87 residues: Small ribosomal subunit protein bS16 (87 aa).

Belongs to the bacterial ribosomal protein bS16 family.

This chain is Small ribosomal subunit protein bS16, found in Ehrlichia chaffeensis (strain ATCC CRL-10679 / Arkansas).